We begin with the raw amino-acid sequence, 359 residues long: Sulfate/thiosulfate import ATP-binding protein CysA (359 aa).

The region spanning 3-237 is the ABC transporter domain; the sequence is VRVAGVRKEF…PNSPFVYGFI (235 aa). An ATP-binding site is contributed by 35–42; the sequence is GPSGSGKT.

The protein belongs to the ABC transporter superfamily. Sulfate/tungstate importer (TC 3.A.1.6) family. As to quaternary structure, the complex is composed of two ATP-binding proteins (CysA), two transmembrane proteins (CysT and CysW) and a solute-binding protein (CysP).

Its subcellular location is the cell inner membrane. It carries out the reaction sulfate(out) + ATP + H2O = sulfate(in) + ADP + phosphate + H(+). The catalysed reaction is thiosulfate(out) + ATP + H2O = thiosulfate(in) + ADP + phosphate + H(+). Part of the ABC transporter complex CysAWTP involved in sulfate/thiosulfate import. Responsible for energy coupling to the transport system. The polypeptide is Sulfate/thiosulfate import ATP-binding protein CysA (Brucella melitensis biotype 1 (strain ATCC 23456 / CCUG 17765 / NCTC 10094 / 16M)).